The chain runs to 198 residues: Recombination protein RecR (198 aa).

The C4-type zinc-finger motif lies at 58 to 73 (CSVCGNYTDTDPCAIC). In terms of domain architecture, Toprim spans 81-175 (SLVCVVEEPK…KVTRIAHGIP (95 aa)).

Belongs to the RecR family.

May play a role in DNA repair. It seems to be involved in an RecBC-independent recombinational process of DNA repair. It may act with RecF and RecO. The chain is Recombination protein RecR from Clostridium acetobutylicum (strain ATCC 824 / DSM 792 / JCM 1419 / IAM 19013 / LMG 5710 / NBRC 13948 / NRRL B-527 / VKM B-1787 / 2291 / W).